The sequence spans 122 residues: Large ribosomal subunit protein uL14 (122 aa).

This sequence belongs to the universal ribosomal protein uL14 family. As to quaternary structure, part of the 50S ribosomal subunit. Forms a cluster with proteins L3 and L19. In the 70S ribosome, L14 and L19 interact and together make contacts with the 16S rRNA in bridges B5 and B8.

Its function is as follows. Binds to 23S rRNA. Forms part of two intersubunit bridges in the 70S ribosome. This chain is Large ribosomal subunit protein uL14, found in Chloroflexus aurantiacus (strain ATCC 29366 / DSM 635 / J-10-fl).